The chain runs to 377 residues: Transcription factor EC (377 aa).

The region spanning 169–222 (QKKDNHNLIERRRRYNINYRIKELGTLIPKSNDPDMRWNKGTILKASVEYIKWL) is the bHLH domain. Positions 349–377 (DPLLSSTSPAASKESSRRSSFSTDDGDDL) are disordered. The segment covering 353–370 (SSTSPAASKESSRRSSFS) has biased composition (low complexity).

Belongs to the MiT/TFE family.

Its subcellular location is the nucleus. Its function is as follows. Transcriptional regulator that acts as a repressor or an activator. Binds DNA. In Gallus gallus (Chicken), this protein is Transcription factor EC (TFEC).